A 277-amino-acid polypeptide reads, in one-letter code: Co-chaperone protein DjlA (277 aa).

Over 1-6 (MRYWGK) the chain is Periplasmic. Residues 7–31 (LLGLVLGVMYAPGVVGALLGLLVGH) traverse the membrane as a helical segment. Residues 32–277 (MVDRALGAKR…DLIKREKGFK (246 aa)) are Cytoplasmic-facing. The J domain occupies 211–277 (DACKVLGVNS…DLIKREKGFK (67 aa)).

As to quaternary structure, homodimer.

The protein resides in the cell inner membrane. Its function is as follows. Regulatory DnaK co-chaperone. Direct interaction between DnaK and DjlA is needed for the induction of the wcaABCDE operon, involved in the synthesis of a colanic acid polysaccharide capsule, possibly through activation of the RcsB/RcsC phosphotransfer signaling pathway. The colanic acid capsule may help the bacterium survive conditions outside the host. This is Co-chaperone protein DjlA from Yersinia pestis.